Reading from the N-terminus, the 420-residue chain is 2',3'-cyclic-nucleotide 3'-phosphodiesterase (420 aa).

Serine 9 bears the Phosphoserine mark. Tyrosine 110 carries the phosphotyrosine modification. 3 positions are modified to phosphoserine: serine 169, serine 227, and serine 239. The active-site Proton acceptor is the histidine 250. Substrate is bound at residue threonine 252. Position 262 is a phosphothreonine (threonine 262). Histidine 329 functions as the Proton donor in the catalytic mechanism. A substrate-binding site is contributed by threonine 331. At serine 358 the chain carries Phosphoserine. Cysteine 417 is subject to Cysteine methyl ester. A lipid anchor (S-farnesyl cysteine) is attached at cysteine 417. Positions 418–420 (TII) are cleaved as a propeptide — removed in mature form.

This sequence belongs to the 2H phosphoesterase superfamily. CNPase family. As to quaternary structure, exists as monomers and homodimers.

The protein resides in the membrane. It is found in the melanosome. It catalyses the reaction a nucleoside 2',3'-cyclic phosphate + H2O = a nucleoside 2'-phosphate + H(+). Catalyzes the formation of 2'-nucleotide products from 2',3'-cyclic substrates. May participate in RNA metabolism in the myelinating cell, CNP is the third most abundant protein in central nervous system myelin. The chain is 2',3'-cyclic-nucleotide 3'-phosphodiesterase from Rattus norvegicus (Rat).